Consider the following 681-residue polypeptide: SRSF protein kinase 2 (681 aa).

A disordered region spans residues 1 to 63 (MSVNSEKSSS…EQEDPADYCK (63 aa)). Residues 22 to 41 (LVPPPPPPPPPPPLPDPAPP) show a composition bias toward pro residues. A compositionally biased stretch (acidic residues) spans 42 to 59 (EPEEEILGSDDEEQEDPA). Position 50 is a phosphoserine (serine 50). A Protein kinase domain is found at 79 to 681 (YHVIRKLGWG…ECLRHPWLNS (603 aa)). Residues 85 to 93 (LGWGHFSTV) and lysine 108 each bind ATP. Aspartate 212 serves as the catalytic Proton acceptor. 3 disordered regions span residues 237–270 (WQKA…KKKL), 302–452 (ENIT…PLFS), and 467–499 (GSPL…KTKT). Threonine 331 and threonine 332 each carry phosphothreonine. The residue at position 378 (serine 378) is a Phosphoserine. Over residues 395–419 (QLEDEEDDEDDCANPEEYNLDEPNA) the composition is skewed to acidic residues. A compositionally biased stretch (polar residues) spans 421 to 431 (SDYTYSSSYEQ). Residue serine 468 is modified to Phosphoserine. Threonine 471 bears the Phosphothreonine mark. Phosphoserine occurs at positions 477, 479, and 483. Position 485 is a phosphothreonine; by PKB/AKT1 (threonine 485). 2 positions are modified to phosphoserine: serine 487 and serine 490. A Phosphoserine; by CK2 modification is found at serine 581.

The protein belongs to the protein kinase superfamily. CMGC Ser/Thr protein kinase family. As to quaternary structure, associates with U4/U6-U5 tri-small nuclear ribonucleoproteins (U4/U6-U5 tri-snRNPs). Interacts with PKB/AKT1 in a phosphorylation-dependent manner. The phosphorylated form (by PKB/AKT1) interacts with YWHAB and YWHAE. Interaction with YWHAB suppresses its cleavage by caspases and inhibits the release of its N-terminal pro-apoptotic fragment. Interacts with SFN. Interacts with ACIN1. Interacts with POLR2A/RNA polymerase II; the interaction occurs during the co-transcriptional formation of inappropriate R-loops. Mg(2+) serves as cofactor. In terms of processing, phosphorylation at Thr-485 by PKB/AKT1 enhances its stimulatory activity in triggering cyclin-D1 (CCND1) expression and promoting apoptosis in neurons, which can be blocked by YWHAB. It also enhances its protein kinase activity toward ACIN1 and SRSF2, promotes its nuclear translocation and prevents its proteolytic cleavage. Post-translationally, proteolytically cleaved at Asp-137 and Asp-401 by caspase-3 during apoptotic cell death. Cleavage at Asp-137 which is the major site of cleavage, produces a small N-terminal fragment that translocates into nucleus and promotes VP16-induced apoptosis. As to expression, expressed in testes, lung and brain.

The protein resides in the cytoplasm. It is found in the nucleus. Its subcellular location is the nucleoplasm. The protein localises to the nucleus speckle. It localises to the chromosome. It carries out the reaction L-seryl-[protein] + ATP = O-phospho-L-seryl-[protein] + ADP + H(+). The catalysed reaction is L-threonyl-[protein] + ATP = O-phospho-L-threonyl-[protein] + ADP + H(+). Activated by phosphorylation on Ser-50 and Ser-581. Serine/arginine-rich protein-specific kinase which specifically phosphorylates its substrates at serine residues located in regions rich in arginine/serine dipeptides, known as RS domains and is involved in the phosphorylation of SR splicing factors and the regulation of splicing. Promotes neuronal apoptosis by up-regulating cyclin-D1 (CCND1) expression. This is done by the phosphorylation of SRSF2, leading to the suppression of p53/TP53 phosphorylation thereby relieving the repressive effect of p53/TP53 on cyclin-D1 (CCND1) expression. Phosphorylates ACIN1, and redistributes it from the nuclear speckles to the nucleoplasm, resulting in cyclin A1 but not cyclin A2 up-regulation. Plays an essential role in spliceosomal B complex formation via the phosphorylation of DDX23/PRP28. Probably by phosphorylating DDX23, leads to the suppression of incorrect R-loops formed during transcription; R-loops are composed of a DNA:RNA hybrid and the associated non-template single-stranded DNA. The protein is SRSF protein kinase 2 of Mus musculus (Mouse).